A 65-amino-acid polypeptide reads, in one-letter code: Large ribosomal subunit protein bL35 (65 aa).

The interval M1–F22 is disordered. The segment covering A10–F22 has biased composition (basic residues).

Belongs to the bacterial ribosomal protein bL35 family.

This is Large ribosomal subunit protein bL35 from Buchnera aphidicola subsp. Schizaphis graminum (strain Sg).